A 274-amino-acid chain; its full sequence is Putative pyruvate, phosphate dikinase regulatory protein (274 aa).

149–156 (GVSRSSKT) serves as a coordination point for ADP.

Belongs to the pyruvate, phosphate/water dikinase regulatory protein family. PDRP subfamily.

It catalyses the reaction N(tele)-phospho-L-histidyl/L-threonyl-[pyruvate, phosphate dikinase] + ADP = N(tele)-phospho-L-histidyl/O-phospho-L-threonyl-[pyruvate, phosphate dikinase] + AMP + H(+). It carries out the reaction N(tele)-phospho-L-histidyl/O-phospho-L-threonyl-[pyruvate, phosphate dikinase] + phosphate + H(+) = N(tele)-phospho-L-histidyl/L-threonyl-[pyruvate, phosphate dikinase] + diphosphate. In terms of biological role, bifunctional serine/threonine kinase and phosphorylase involved in the regulation of the pyruvate, phosphate dikinase (PPDK) by catalyzing its phosphorylation/dephosphorylation. The chain is Putative pyruvate, phosphate dikinase regulatory protein from Rhizorhabdus wittichii (strain DSM 6014 / CCUG 31198 / JCM 15750 / NBRC 105917 / EY 4224 / RW1) (Sphingomonas wittichii).